Here is a 371-residue protein sequence, read N- to C-terminus: tRNA N6-adenosine threonylcarbamoyltransferase (371 aa).

His-110 and His-114 together coordinate Fe cation. Residues 132 to 136 (LVSGG), Asp-165, Gly-178, Asp-182, and Asn-289 contribute to the substrate site. Position 317 (Asp-317) interacts with Fe cation.

It belongs to the KAE1 / TsaD family. Fe(2+) is required as a cofactor.

It is found in the cytoplasm. The enzyme catalyses L-threonylcarbamoyladenylate + adenosine(37) in tRNA = N(6)-L-threonylcarbamoyladenosine(37) in tRNA + AMP + H(+). Functionally, required for the formation of a threonylcarbamoyl group on adenosine at position 37 (t(6)A37) in tRNAs that read codons beginning with adenine. Is involved in the transfer of the threonylcarbamoyl moiety of threonylcarbamoyl-AMP (TC-AMP) to the N6 group of A37, together with TsaE and TsaB. TsaD likely plays a direct catalytic role in this reaction. In Solidesulfovibrio magneticus (strain ATCC 700980 / DSM 13731 / RS-1) (Desulfovibrio magneticus), this protein is tRNA N6-adenosine threonylcarbamoyltransferase.